Reading from the N-terminus, the 264-residue chain is Thymidylate synthase (264 aa).

R21 serves as a coordination point for dUMP. H51 is a (6R)-5,10-methylene-5,6,7,8-tetrahydrofolate binding site. A dUMP-binding site is contributed by 126–127; sequence RR. C146 (nucleophile) is an active-site residue. Residues 166 to 169, N177, and 207 to 209 each bind dUMP; these read RSAD and HIY. D169 provides a ligand contact to (6R)-5,10-methylene-5,6,7,8-tetrahydrofolate. A263 lines the (6R)-5,10-methylene-5,6,7,8-tetrahydrofolate pocket.

The protein belongs to the thymidylate synthase family. Bacterial-type ThyA subfamily. As to quaternary structure, homodimer.

It is found in the cytoplasm. It carries out the reaction dUMP + (6R)-5,10-methylene-5,6,7,8-tetrahydrofolate = 7,8-dihydrofolate + dTMP. It participates in pyrimidine metabolism; dTTP biosynthesis. Functionally, catalyzes the reductive methylation of 2'-deoxyuridine-5'-monophosphate (dUMP) to 2'-deoxythymidine-5'-monophosphate (dTMP) while utilizing 5,10-methylenetetrahydrofolate (mTHF) as the methyl donor and reductant in the reaction, yielding dihydrofolate (DHF) as a by-product. This enzymatic reaction provides an intracellular de novo source of dTMP, an essential precursor for DNA biosynthesis. The sequence is that of Thymidylate synthase from Ruminiclostridium cellulolyticum (strain ATCC 35319 / DSM 5812 / JCM 6584 / H10) (Clostridium cellulolyticum).